Consider the following 1388-residue polypeptide: Rho-associated protein kinase 2 (1388 aa).

Residues M1–R26 are disordered. Positions Y92–F354 constitute a Protein kinase domain. Residues I98 to V106 and K121 each bind ATP. D214 acts as the Proton acceptor in catalysis. In terms of domain architecture, AGC-kinase C-terminal spans D357 to S425. Positions N363–V784 are interaction with PPP1R12A. The segment at P373–L420 is interaction with NPM1. T414 carries the post-translational modification Phosphothreonine; by ROCK2. Positions S439 to D1131 form a coiled coil. One can recognise an REM-1 domain in the interval T497 to T573. Residues N512–E530 show a composition bias toward basic and acidic residues. The tract at residues N512–D532 is disordered. Y722 carries the phosphotyrosine; by SRC modification. A RhoBD domain is found at T979 to P1047. Residues T979 to P1047 are RHOA binding. S1137 carries the post-translational modification Phosphoserine. The PH domain maps to E1150–P1349. T1212 carries the phosphothreonine modification. The Phorbol-ester/DAG-type zinc finger occupies G1260–C1315. The segment at V1345–S1388 is disordered. Phosphoserine is present on residues S1362 and S1374. Over residues S1362–R1376 the composition is skewed to polar residues.

The protein belongs to the protein kinase superfamily. AGC Ser/Thr protein kinase family. Homodimer. Interacts with IRS1. Interacts with RAF1. Interacts with RHOA (activated by GTP), RHOB and RHOC. Interacts with PPP1R12A. Interacts with EP300. Interacts with CHORDC1. Interacts with BRCA2. Interacts with NPM1; this interaction enhances ROCK2 activity. Interacts with SORL1. Interacts with PJVK. Mg(2+) is required as a cofactor. Autophosphorylated. Phosphorylation at Tyr-722 reduces its binding to RHOA and is crucial for focal adhesion dynamics. Dephosphorylation by PTPN11 stimulates its RHOA binding activity. Post-translationally, cleaved by granzyme B during apoptosis. This leads to constitutive activation of the kinase and membrane blebbing. In terms of tissue distribution, highly expressed in brain, heart, lung, liver, stomach, spleen, kidney, testis, muscle, embryo and placenta. Isoform 2 is expressed predominantly in the skeletal muscle.

Its subcellular location is the cytoplasm. The protein resides in the cell membrane. It localises to the nucleus. It is found in the cytoskeleton. The protein localises to the microtubule organizing center. Its subcellular location is the centrosome. It carries out the reaction L-seryl-[protein] + ATP = O-phospho-L-seryl-[protein] + ADP + H(+). The catalysed reaction is L-threonyl-[protein] + ATP = O-phospho-L-threonyl-[protein] + ADP + H(+). Its activity is regulated as follows. Activated by RHOA binding. Inhibited by Y-27632. Functionally, protein kinase which is a key regulator of actin cytoskeleton and cell polarity. Involved in regulation of smooth muscle contraction, actin cytoskeleton organization, stress fiber and focal adhesion formation, neurite retraction, cell adhesion and motility via phosphorylation of ADD1, BRCA2, CNN1, EZR, DPYSL2, EP300, MSN, MYL9/MLC2, NPM1, RDX, PPP1R12A and VIM. Phosphorylates SORL1 and IRF4. Acts as a negative regulator of VEGF-induced angiogenic endothelial cell activation. Positively regulates the activation of p42/MAPK1-p44/MAPK3 and of p90RSK/RPS6KA1 during myogenic differentiation. Plays an important role in the timely initiation of centrosome duplication. Inhibits keratinocyte terminal differentiation. May regulate closure of the eyelids and ventral body wall through organization of actomyosin bundles. Plays a critical role in the regulation of spine and synaptic properties in the hippocampus. Plays a role in placental homeostasis during the perinatal period. Plays an important role in generating the circadian rhythm of the aortic myofilament Ca(2+) sensitivity and vascular contractility by modulating the myosin light chain phosphorylation. The polypeptide is Rho-associated protein kinase 2 (Rock2) (Mus musculus (Mouse)).